We begin with the raw amino-acid sequence, 303 residues long: DDRGK domain-containing protein 1 (303 aa).

The Lumenal portion of the chain corresponds to 1 to 2 (MD). A helical transmembrane segment spans residues 3–23 (LILLIGIATALLIILLTLYFL). Residues 24 to 303 (QKRNAPAETK…TPVTASEGGA (280 aa)) are Cytoplasmic-facing. Disordered regions lie at residues 31-53 (ETKAAAQPQRGVPLRAQEGVPRR) and 84-160 (AIDP…AEVE). The span at 106 to 160 (LDEKMGAKKRAKMEAKEQKRLQREQELHDREQRKVKEAKEEAERKQQDDLDAEVE) shows a compositional bias: basic and acidic residues.

It belongs to the DDRGK1 family. As to quaternary structure, interacts with Atg9; the interaction is transient.

It is found in the endoplasmic reticulum membrane. Functionally, substrate adapter for ufmylation, the covalent attachment of the ubiquitin-like modifier UFM1 to substrate proteins. Required for ufmylation of Atg9; protects the nervous system during aging, possibly by stabilizing Atg9 and supporting its function. This is DDRGK domain-containing protein 1 from Drosophila grimshawi (Hawaiian fruit fly).